A 416-amino-acid polypeptide reads, in one-letter code: 4-hydroxy-3-methylbut-2-en-1-yl diphosphate synthase (flavodoxin) (416 aa).

Residues C304, C307, C350, and E357 each contribute to the [4Fe-4S] cluster site.

The protein belongs to the IspG family. [4Fe-4S] cluster is required as a cofactor.

The catalysed reaction is (2E)-4-hydroxy-3-methylbut-2-enyl diphosphate + oxidized [flavodoxin] + H2O + 2 H(+) = 2-C-methyl-D-erythritol 2,4-cyclic diphosphate + reduced [flavodoxin]. Its pathway is isoprenoid biosynthesis; isopentenyl diphosphate biosynthesis via DXP pathway; isopentenyl diphosphate from 1-deoxy-D-xylulose 5-phosphate: step 5/6. Its function is as follows. Converts 2C-methyl-D-erythritol 2,4-cyclodiphosphate (ME-2,4cPP) into 1-hydroxy-2-methyl-2-(E)-butenyl 4-diphosphate. In Rhizobium etli (strain CIAT 652), this protein is 4-hydroxy-3-methylbut-2-en-1-yl diphosphate synthase (flavodoxin).